Consider the following 113-residue polypeptide: Death-associated protein-like 1.S (113 aa).

Positions 1-53 (MTKELKVQSSPQALKAGHLPAVKAGGMRVSKKQGNDENSAPEKNAKKTLQEKP) are disordered.

It belongs to the DAP-DAPL1 family. As to quaternary structure, associates with ribosomes; preventing translation. Interacts with eiF5a (eif5a and eif5a2); preventing translation.

In terms of biological role, ribosome-binding protein that promotes ribosome hibernation, a process during which ribosomes are stabilized in an inactive state and preserved from proteasomal degradation. Acts via its association with eiF5a (eif5a and eif5a2) at the polypeptide exit tunnel of the ribosome, preventing mRNA translation. Plays a key role in ribosome hibernation in the mature egg by preventing mRNA translation, leading to ribosome inactivation. Ribosomes, which are produced in large quantities during oogenesis, are stored and translationally repressed in the egg and early embryo. The sequence is that of Death-associated protein-like 1.S (dapl1.S) from Xenopus laevis (African clawed frog).